Here is a 360-residue protein sequence, read N- to C-terminus: Peptide chain release factor 1 (360 aa).

Gln235 bears the N5-methylglutamine mark. Over residues 284–293 the composition is skewed to basic and acidic residues; sequence QKRQQEEAST. Residues 284–305 form a disordered region; it reads QKRQQEEASTRRNLLGSGDRSD.

It belongs to the prokaryotic/mitochondrial release factor family. Methylated by PrmC. Methylation increases the termination efficiency of RF1.

It is found in the cytoplasm. In terms of biological role, peptide chain release factor 1 directs the termination of translation in response to the peptide chain termination codons UAG and UAA. This is Peptide chain release factor 1 from Pectobacterium carotovorum subsp. carotovorum (strain PC1).